The chain runs to 562 residues: NAD-dependent malic enzyme (562 aa).

Catalysis depends on Tyr101, which acts as the Proton donor. Position 154 (Arg154) interacts with NAD(+). Catalysis depends on Lys172, which acts as the Proton acceptor. Residues Glu243, Asp244, and Asp267 each contribute to the a divalent metal cation site. Residues Asp267 and Asn415 each coordinate NAD(+).

It belongs to the malic enzymes family. Homotetramer. Mg(2+) is required as a cofactor. It depends on Mn(2+) as a cofactor.

The enzyme catalyses (S)-malate + NAD(+) = pyruvate + CO2 + NADH. It catalyses the reaction oxaloacetate + H(+) = pyruvate + CO2. This Vibrio parahaemolyticus serotype O3:K6 (strain RIMD 2210633) protein is NAD-dependent malic enzyme.